The following is a 283-amino-acid chain: Lectin subunit alpha (283 aa).

Positions 1–23 are cleaved as a signal peptide; that stretch reads MSLTMKNVEGFVIFLVIFTSTAA. The 109-residue stretch at 51–159 folds into the C-type lectin domain; sequence HECARHDQQL…NVKMGYICEP (109 aa). Intrachain disulfides connect Cys53-Cys157 and Cys132-Cys149.

Functionally, role in the defense system of the organism against microorganisms. This lectin binds galactose. In Sarcophaga peregrina (Flesh fly), this protein is Lectin subunit alpha.